The sequence spans 64 residues: Prokaryotic ubiquitin-like protein Pup (64 aa).

A disordered region spans residues 1 to 35 (MAQGGQVSAGGGRRDDDEPIEQTSGAGTQQVNVTG). Polar residues predominate over residues 21–33 (EQTSGAGTQQVNV). The ARC ATPase binding stretch occupies residues 21 to 58 (EQTSGAGTQQVNVTGTDDLLDEIDGLLENNAEEFVRSY). Gln-64 carries the deamidated glutamine modification. Gln-64 is covalently cross-linked (Isoglutamyl lysine isopeptide (Gln-Lys) (interchain with K-? in acceptor proteins)).

Belongs to the prokaryotic ubiquitin-like protein family. In terms of assembly, strongly interacts with the proteasome-associated ATPase ARC through a hydrophobic interface; the interacting region of Pup lies in its C-terminal half. There is one Pup binding site per ARC hexamer ring. In terms of processing, is modified by deamidation of its C-terminal glutamine to glutamate by the deamidase Dop, a prerequisite to the subsequent pupylation process.

Its pathway is protein degradation; proteasomal Pup-dependent pathway. Its function is as follows. Protein modifier that is covalently attached to lysine residues of substrate proteins, thereby targeting them for proteasomal degradation. The tagging system is termed pupylation. The sequence is that of Prokaryotic ubiquitin-like protein Pup from Corynebacterium jeikeium (strain K411).